A 236-amino-acid chain; its full sequence is Ras-related protein RabY (236 aa).

18-25 (GDRKTGKT) lines the GTP pocket. The Effector region signature appears at 40–48 (YRQTNLLHF). Residues 66–70 (DSQAD) and 126–129 (NKSD) contribute to the GTP site. Over residues 192–225 (QQQQQQQQQQQQQQQQQQQQQQQQQQQQQQQHQQ) the composition is skewed to low complexity. The interval 192-236 (QQQQQQQQQQQQQQQQQQQQQQQQQQQQQQQHQQSSKTKIGCLIQ) is disordered. At Cys-233 the chain carries Cysteine methyl ester. Residue Cys-233 is the site of S-geranylgeranyl cysteine attachment. A propeptide spans 234–236 (LIQ) (removed in mature form).

Belongs to the small GTPase superfamily. Rab family.

The protein localises to the cell membrane. The polypeptide is Ras-related protein RabY (rabY) (Dictyostelium discoideum (Social amoeba)).